We begin with the raw amino-acid sequence, 293 residues long: Homoserine kinase (293 aa).

Position 84-94 (84-94 (PLSRGLGSSSA)) interacts with ATP.

The protein belongs to the GHMP kinase family. Homoserine kinase subfamily.

The protein resides in the cytoplasm. The enzyme catalyses L-homoserine + ATP = O-phospho-L-homoserine + ADP + H(+). Its pathway is amino-acid biosynthesis; L-threonine biosynthesis; L-threonine from L-aspartate: step 4/5. Functionally, catalyzes the ATP-dependent phosphorylation of L-homoserine to L-homoserine phosphate. In Aliarcobacter butzleri (strain RM4018) (Arcobacter butzleri), this protein is Homoserine kinase.